Consider the following 303-residue polypeptide: Coenzyme PQQ synthesis protein B (303 aa).

Belongs to the PqqB family.

It participates in cofactor biosynthesis; pyrroloquinoline quinone biosynthesis. Its function is as follows. May be involved in the transport of PQQ or its precursor to the periplasm. The sequence is that of Coenzyme PQQ synthesis protein B from Pseudomonas savastanoi pv. phaseolicola (strain 1448A / Race 6) (Pseudomonas syringae pv. phaseolicola (strain 1448A / Race 6)).